We begin with the raw amino-acid sequence, 339 residues long: Transcription factor IIIA (339 aa).

C2H2-type zinc fingers lie at residues 13–37 (YICS…LCKH), 43–67 (FPCK…SITH), 73–98 (FKCD…NRFH), 105–129 (YVCH…QFTH), 135–159 (YKCP…EKVH), 162–188 (YPCK…KECH), 192–214 (VMCD…KKTH), 221–246 (YCCP…QSFH), and 252–276 (FACE…SVVH). Basic and acidic residues-rich tracts occupy residues 275–288 (VHDP…EKCP) and 305–316 (KSKEKSAAKATE). The disordered stretch occupies residues 275-339 (VHDPEKRKLK…ETKGSLVIEK (65 aa)).

As to expression, synthesized in oocytes and, in much lower levels, in somatic cells.

The protein resides in the nucleus. In terms of biological role, involved in ribosomal large subunit biogenesis. Interacts with the internal control region (ICR) of approximately 50 bases within the 5S RNA genes, is required for correct transcription of these genes by RNA polymerase III. Also binds the transcribed 5S RNA's. The protein is Transcription factor IIIA (gtf3a) of Xenopus borealis (Kenyan clawed frog).